We begin with the raw amino-acid sequence, 147 residues long: Large ribosomal subunit protein uL11 (147 aa).

Belongs to the universal ribosomal protein uL11 family. As to quaternary structure, part of the ribosomal stalk of the 50S ribosomal subunit. Interacts with L10 and the large rRNA to form the base of the stalk. L10 forms an elongated spine to which L12 dimers bind in a sequential fashion forming a multimeric L10(L12)X complex. In terms of processing, one or more lysine residues are methylated.

Forms part of the ribosomal stalk which helps the ribosome interact with GTP-bound translation factors. The sequence is that of Large ribosomal subunit protein uL11 from Bacteroides thetaiotaomicron (strain ATCC 29148 / DSM 2079 / JCM 5827 / CCUG 10774 / NCTC 10582 / VPI-5482 / E50).